The primary structure comprises 419 residues: Serine hydroxymethyltransferase (419 aa).

Residues Leu-121 and 125–127 (GHL) each bind (6S)-5,6,7,8-tetrahydrofolate. N6-(pyridoxal phosphate)lysine is present on Lys-229. Residue 354–356 (SPF) coordinates (6S)-5,6,7,8-tetrahydrofolate.

It belongs to the SHMT family. Homodimer. Pyridoxal 5'-phosphate is required as a cofactor.

The protein localises to the cytoplasm. It catalyses the reaction (6R)-5,10-methylene-5,6,7,8-tetrahydrofolate + glycine + H2O = (6S)-5,6,7,8-tetrahydrofolate + L-serine. It participates in one-carbon metabolism; tetrahydrofolate interconversion. The protein operates within amino-acid biosynthesis; glycine biosynthesis; glycine from L-serine: step 1/1. In terms of biological role, catalyzes the reversible interconversion of serine and glycine with tetrahydrofolate (THF) serving as the one-carbon carrier. This reaction serves as the major source of one-carbon groups required for the biosynthesis of purines, thymidylate, methionine, and other important biomolecules. Also exhibits THF-independent aldolase activity toward beta-hydroxyamino acids, producing glycine and aldehydes, via a retro-aldol mechanism. This Coxiella burnetii (strain CbuG_Q212) (Coxiella burnetii (strain Q212)) protein is Serine hydroxymethyltransferase.